The chain runs to 310 residues: Acetyl-coenzyme A carboxylase carboxyl transferase subunit beta (310 aa).

In terms of domain architecture, CoA carboxyltransferase N-terminal spans 27–296 (LWRKCPNCEA…QDRDAEPDDT (270 aa)). Zn(2+) contacts are provided by C31, C34, C50, and C53. A C4-type zinc finger spans residues 31–53 (CPNCEAVLYLPELERHQSVCPKC). Residues 282 to 310 (THQPHQDRDAEPDDTASQSTLDEFSQADH) are disordered.

It belongs to the AccD/PCCB family. In terms of assembly, acetyl-CoA carboxylase is a heterohexamer composed of biotin carboxyl carrier protein (AccB), biotin carboxylase (AccC) and two subunits each of ACCase subunit alpha (AccA) and ACCase subunit beta (AccD). The cofactor is Zn(2+).

It localises to the cytoplasm. The enzyme catalyses N(6)-carboxybiotinyl-L-lysyl-[protein] + acetyl-CoA = N(6)-biotinyl-L-lysyl-[protein] + malonyl-CoA. It participates in lipid metabolism; malonyl-CoA biosynthesis; malonyl-CoA from acetyl-CoA: step 1/1. In terms of biological role, component of the acetyl coenzyme A carboxylase (ACC) complex. Biotin carboxylase (BC) catalyzes the carboxylation of biotin on its carrier protein (BCCP) and then the CO(2) group is transferred by the transcarboxylase to acetyl-CoA to form malonyl-CoA. The chain is Acetyl-coenzyme A carboxylase carboxyl transferase subunit beta from Chromohalobacter salexigens (strain ATCC BAA-138 / DSM 3043 / CIP 106854 / NCIMB 13768 / 1H11).